Consider the following 598-residue polypeptide: Elongation factor 4 (598 aa).

The region spanning 2–184 (QHIRNFSIIA…TVVRRVPPPK (183 aa)) is the tr-type G domain. GTP-binding positions include 14-19 (DHGKST) and 131-134 (NKID).

The protein belongs to the TRAFAC class translation factor GTPase superfamily. Classic translation factor GTPase family. LepA subfamily.

Its subcellular location is the cell inner membrane. It carries out the reaction GTP + H2O = GDP + phosphate + H(+). Functionally, required for accurate and efficient protein synthesis under certain stress conditions. May act as a fidelity factor of the translation reaction, by catalyzing a one-codon backward translocation of tRNAs on improperly translocated ribosomes. Back-translocation proceeds from a post-translocation (POST) complex to a pre-translocation (PRE) complex, thus giving elongation factor G a second chance to translocate the tRNAs correctly. Binds to ribosomes in a GTP-dependent manner. This is Elongation factor 4 from Aromatoleum aromaticum (strain DSM 19018 / LMG 30748 / EbN1) (Azoarcus sp. (strain EbN1)).